A 256-amino-acid chain; its full sequence is Imidazole glycerol phosphate synthase subunit HisF (256 aa).

Active-site residues include Asp-11 and Asp-130.

The protein belongs to the HisA/HisF family. Heterodimer of HisH and HisF.

It localises to the cytoplasm. The enzyme catalyses 5-[(5-phospho-1-deoxy-D-ribulos-1-ylimino)methylamino]-1-(5-phospho-beta-D-ribosyl)imidazole-4-carboxamide + L-glutamine = D-erythro-1-(imidazol-4-yl)glycerol 3-phosphate + 5-amino-1-(5-phospho-beta-D-ribosyl)imidazole-4-carboxamide + L-glutamate + H(+). It functions in the pathway amino-acid biosynthesis; L-histidine biosynthesis; L-histidine from 5-phospho-alpha-D-ribose 1-diphosphate: step 5/9. Functionally, IGPS catalyzes the conversion of PRFAR and glutamine to IGP, AICAR and glutamate. The HisF subunit catalyzes the cyclization activity that produces IGP and AICAR from PRFAR using the ammonia provided by the HisH subunit. The sequence is that of Imidazole glycerol phosphate synthase subunit HisF from Prochlorococcus marinus (strain NATL2A).